Reading from the N-terminus, the 160-residue chain is Large ribosomal subunit protein uL11 (160 aa).

This sequence belongs to the universal ribosomal protein uL11 family. In terms of assembly, part of the ribosomal stalk of the 50S ribosomal subunit. Interacts with L10 and the large rRNA to form the base of the stalk. L10 forms an elongated spine to which L12 dimers bind in a sequential fashion forming a multimeric L10(L12)X complex.

In terms of biological role, forms part of the ribosomal stalk which helps the ribosome interact with GTP-bound translation factors. The protein is Large ribosomal subunit protein uL11 of Methanococcus aeolicus (strain ATCC BAA-1280 / DSM 17508 / OCM 812 / Nankai-3).